The sequence spans 221 residues: NADH-ubiquinone oxidoreductase chain 6 (221 aa).

5 helical membrane passes run 18–38 (FVEYILDIFSIMAFLTGIYVI), 44–64 (IVSVLFLILLFGGISSYLNII), 74–94 (IIVYIGAVSILFLFILMLINI), 107–127 (IPLTIFIGIIFSNFLFPMLPY), and 195–215 (IWLIIASFILLLAMVGSIVIT).

This sequence belongs to the complex I subunit 6 family.

The protein resides in the mitochondrion membrane. The enzyme catalyses a ubiquinone + NADH + 5 H(+)(in) = a ubiquinol + NAD(+) + 4 H(+)(out). Functionally, core subunit of the mitochondrial membrane respiratory chain NADH dehydrogenase (Complex I) that is believed to belong to the minimal assembly required for catalysis. Complex I functions in the transfer of electrons from NADH to the respiratory chain. The immediate electron acceptor for the enzyme is believed to be ubiquinone. This chain is NADH-ubiquinone oxidoreductase chain 6 (ND6), found in Podospora anserina (strain S / ATCC MYA-4624 / DSM 980 / FGSC 10383) (Pleurage anserina).